The sequence spans 718 residues: Protein SQS1 (718 aa).

Disordered stretches follow at residues 247 to 301 (TTAI…DEDD), 341 to 404 (FALN…GLAR), and 430 to 452 (KRGA…SANA). The span at 265–282 (TSLRDDPEVIPVAREKRA) shows a compositional bias: basic and acidic residues. Over residues 283–293 (GRQRSRSKASK) the composition is skewed to basic residues. Residues 375–400 (DADEDNGDENDEADEDDDMDADMDDE) show a composition bias toward acidic residues. Positions 442-452 (TPSSFAKSANA) are enriched in polar residues. The R3H domain occupies 537–599 (GLRLEDFKTE…TRRPVLYRSK (63 aa)). One can recognise a G-patch domain in the interval 673 to 718 (QENKGRAMLEKMGWSKGMALGALENKGILEPVAQVVKKSKAGLGRT).

It belongs to the SQS1 family.

The protein localises to the cytoplasm. Its subcellular location is the nucleus. Functionally, may be involved in splicing. The chain is Protein SQS1 (SQS1) from Podospora anserina (Pleurage anserina).